Consider the following 120-residue polypeptide: Acyl carrier protein, mitochondrial (120 aa).

Residues 43 to 117 (KEITDRVIGV…ETISYLRKTP (75 aa)) enclose the Carrier domain. Serine 77 is modified (O-(pantetheine 4'-phosphoryl)serine).

This sequence belongs to the acyl carrier protein (ACP) family. Complex I is composed of about 45 different subunits. Post-translationally, 4'-phosphopantetheine is transferred from CoA to a specific serine of apo-ACP by acpS. This modification is essential for activity because fatty acids are bound in thioester linkage to the sulfhydryl of the prosthetic group.

The protein resides in the mitochondrion. Its pathway is lipid metabolism; fatty acid biosynthesis. Its function is as follows. Carrier of the growing fatty acid chain in fatty acid biosynthesis. May be involved in the synthesis of very-long-chain fatty acids. Accessory and non-catalytic subunit of the mitochondrial membrane respiratory chain NADH dehydrogenase (Complex I), which functions in the transfer of electrons from NADH to the respiratory chain. This chain is Acyl carrier protein, mitochondrial (ndufab1), found in Dictyostelium discoideum (Social amoeba).